The chain runs to 380 residues: Pregnancy-associated glycoprotein 6 (380 aa).

A signal peptide spans Met-1–Cys-15. Positions Ile-16–Phe-53 are cleaved as a propeptide — activation peptide. N-linked (GlcNAc...) asparagine glycosylation is found at Asn-57 and Asn-74. Residues Tyr-71–Ala-377 enclose the Peptidase A1 domain. Asp-89 is an active-site residue. The cysteines at positions 102 and 107 are disulfide-linked. Residue Asn-125 is glycosylated (N-linked (GlcNAc...) asparagine). A disulfide bond links Cys-261 and Cys-265. The active site involves Asp-270. Cys-303 and Cys-337 are disulfide-bonded.

The protein belongs to the peptidase A1 family. In terms of tissue distribution, trophoblast and placental tissue. Produced specifically in the invasive binucleate cells of the placenta.

The protein resides in the secreted. Its subcellular location is the extracellular space. The sequence is that of Pregnancy-associated glycoprotein 6 from Ovis aries (Sheep).